The sequence spans 398 residues: Probable elongation factor 1-gamma (398 aa).

One can recognise a GST C-terminal domain in the interval 66–199; that stretch reads GTSANAETVQ…SVAQFNQAKF (134 aa). Positions 210–248 are disordered; the sequence is APKAEKPKKEAKPAAAAAQPEDDEPKEEKSKDPFQDMPK. Positions 211–221 are enriched in basic and acidic residues; that stretch reads PKAEKPKKEAK. The EF-1-gamma C-terminal domain maps to 239-398; it reads SKDPFQDMPK…KKFNQGKIFK (160 aa).

As to quaternary structure, EF-1 is composed of four subunits: alpha, beta, delta, and gamma. In terms of processing, AMPylated by fic-1.

In terms of biological role, probably plays a role in anchoring the complex to other cellular components. This chain is Probable elongation factor 1-gamma, found in Caenorhabditis elegans.